The sequence spans 227 residues: Chloronitrobenzene nitroreductase (227 aa).

Residue 14-18 (RRTKR) coordinates FMN. Ser44 lines the NADP(+) pocket. FMN-binding positions include 172 to 173 (GL) and Arg215.

It belongs to the nitroreductase family. FMN serves as cofactor.

The enzyme catalyses N-phenylhydroxylamine + 2 NADP(+) + H2O = nitrobenzene + 2 NADPH + 2 H(+). It participates in xenobiotic degradation; nitrobenzene degradation. Its pathway is xenobiotic degradation; 4-chloronitrobenzene degradation. Involved in the biodegradation of chlorinated nitroaromatic compounds. Catalyzes the reduction of 4-chloronitrobenzene to yield 1-hydroxylamino-4-chlorobenzene. Probably also able to catalyze the two-electron reduction of nitrobenzene (NB) to produce a nitrosobenzene (NOB) intermediate, which is immediately reduced to hydroxylaminobenzene (HAB) by a second two-electron transfer. The sequence is that of Chloronitrobenzene nitroreductase from Comamonas testosteroni (Pseudomonas testosteroni).